Consider the following 242-residue polypeptide: Ubiquitin-conjugating enzyme E2 6 (242 aa).

Residues 1–217 (MASRQAYKRL…QPAGNGTTSN (217 aa)) are Cytoplasmic-facing. The 159-residue stretch at 5-163 (QAYKRLSKEY…FPELAEQNRR (159 aa)) folds into the UBC core domain. Cys87 (glycyl thioester intermediate) is an active-site residue. A helical membrane pass occupies residues 218 to 240 (SIGRSLLFVLFSLAALLVAVCYT).

This sequence belongs to the ubiquitin-conjugating enzyme family.

It is found in the endoplasmic reticulum membrane. The enzyme catalyses S-ubiquitinyl-[E1 ubiquitin-activating enzyme]-L-cysteine + [E2 ubiquitin-conjugating enzyme]-L-cysteine = [E1 ubiquitin-activating enzyme]-L-cysteine + S-ubiquitinyl-[E2 ubiquitin-conjugating enzyme]-L-cysteine.. It functions in the pathway protein modification; protein ubiquitination. Functionally, catalyzes the covalent attachment of ubiquitin to other proteins. Functions in degradation of misfolded or regulated proteins localized in the endoplasmic reticulum (ER) lumen or membrane via the ubiquitin-proteasome system. Cognate E2 conjugating enzyme for the DOA10 ubiquitin ligase complex, which is part of the ERAD-C pathway responsible for the rapid degradation of membrane proteins with misfolded cytoplasmic domains. The polypeptide is Ubiquitin-conjugating enzyme E2 6 (UBC6) (Eremothecium gossypii (strain ATCC 10895 / CBS 109.51 / FGSC 9923 / NRRL Y-1056) (Yeast)).